The sequence spans 376 residues: Erythronate-4-phosphate dehydrogenase (376 aa).

Serine 45 and threonine 67 together coordinate substrate. NAD(+) is bound by residues 127–128 (QV), aspartate 147, and threonine 176. Residue arginine 209 is part of the active site. Position 233 (aspartate 233) interacts with NAD(+). The active site involves glutamate 238. Histidine 255 (proton donor) is an active-site residue. NAD(+) is bound at residue glycine 258. Tyrosine 259 serves as a coordination point for substrate.

The protein belongs to the D-isomer specific 2-hydroxyacid dehydrogenase family. PdxB subfamily. In terms of assembly, homodimer.

It is found in the cytoplasm. It catalyses the reaction 4-phospho-D-erythronate + NAD(+) = (R)-3-hydroxy-2-oxo-4-phosphooxybutanoate + NADH + H(+). It participates in cofactor biosynthesis; pyridoxine 5'-phosphate biosynthesis; pyridoxine 5'-phosphate from D-erythrose 4-phosphate: step 2/5. In terms of biological role, catalyzes the oxidation of erythronate-4-phosphate to 3-hydroxy-2-oxo-4-phosphonooxybutanoate. The polypeptide is Erythronate-4-phosphate dehydrogenase (Aliivibrio fischeri (strain ATCC 700601 / ES114) (Vibrio fischeri)).